The primary structure comprises 502 residues: Probable cytosol aminopeptidase (502 aa).

Positions 267 and 272 each coordinate Mn(2+). The active site involves K279. Mn(2+)-binding residues include D290, D349, and E351. R353 is a catalytic residue.

The protein belongs to the peptidase M17 family. Mn(2+) serves as cofactor.

The protein resides in the cytoplasm. The catalysed reaction is Release of an N-terminal amino acid, Xaa-|-Yaa-, in which Xaa is preferably Leu, but may be other amino acids including Pro although not Arg or Lys, and Yaa may be Pro. Amino acid amides and methyl esters are also readily hydrolyzed, but rates on arylamides are exceedingly low.. It carries out the reaction Release of an N-terminal amino acid, preferentially leucine, but not glutamic or aspartic acids.. In terms of biological role, presumably involved in the processing and regular turnover of intracellular proteins. Catalyzes the removal of unsubstituted N-terminal amino acids from various peptides. The polypeptide is Probable cytosol aminopeptidase (Aeromonas hydrophila subsp. hydrophila (strain ATCC 7966 / DSM 30187 / BCRC 13018 / CCUG 14551 / JCM 1027 / KCTC 2358 / NCIMB 9240 / NCTC 8049)).